Consider the following 822-residue polypeptide: Protein SIEVE ELEMENT OCCLUSION A (822 aa).

Residues 25-62 (PRSAEQRLADNAGERRPLAPRSHEDNPFGGHTDDHHVA) are disordered. Residues 28–62 (AEQRLADNAGERRPLAPRSHEDNPFGGHTDDHHVA) show a composition bias toward basic and acidic residues.

As to quaternary structure, can form homodimer. Expressed in phloem sieve elements.

Functionally, scaffold protein required to form the phloem filament matrix in sieve elements. The protein is Protein SIEVE ELEMENT OCCLUSION A of Arabidopsis thaliana (Mouse-ear cress).